Here is a 207-residue protein sequence, read N- to C-terminus: Large ribosomal subunit protein uL4 (207 aa).

Residues 44 to 76 (RRQGTQSTKTKSEVRGGGKKPWRQKGTGRARQG) form a disordered region. Residues 60-71 (GGKKPWRQKGTG) show a composition bias toward basic residues.

It belongs to the universal ribosomal protein uL4 family. As to quaternary structure, part of the 50S ribosomal subunit.

Functionally, one of the primary rRNA binding proteins, this protein initially binds near the 5'-end of the 23S rRNA. It is important during the early stages of 50S assembly. It makes multiple contacts with different domains of the 23S rRNA in the assembled 50S subunit and ribosome. Forms part of the polypeptide exit tunnel. The chain is Large ribosomal subunit protein uL4 from Ruminiclostridium cellulolyticum (strain ATCC 35319 / DSM 5812 / JCM 6584 / H10) (Clostridium cellulolyticum).